Here is a 184-residue protein sequence, read N- to C-terminus: dTTP/UTP pyrophosphatase (184 aa).

The active-site Proton acceptor is Asp67.

It belongs to the Maf family. YhdE subfamily. A divalent metal cation is required as a cofactor.

The protein localises to the cytoplasm. It catalyses the reaction dTTP + H2O = dTMP + diphosphate + H(+). It carries out the reaction UTP + H2O = UMP + diphosphate + H(+). In terms of biological role, nucleoside triphosphate pyrophosphatase that hydrolyzes dTTP and UTP. May have a dual role in cell division arrest and in preventing the incorporation of modified nucleotides into cellular nucleic acids. In Elusimicrobium minutum (strain Pei191), this protein is dTTP/UTP pyrophosphatase.